The sequence spans 253 residues: Ubiquinone biosynthesis O-methyltransferase (253 aa).

R47, G78, D99, and M141 together coordinate S-adenosyl-L-methionine.

It belongs to the methyltransferase superfamily. UbiG/COQ3 family.

The enzyme catalyses a 3-demethylubiquinol + S-adenosyl-L-methionine = a ubiquinol + S-adenosyl-L-homocysteine + H(+). It carries out the reaction a 3-(all-trans-polyprenyl)benzene-1,2-diol + S-adenosyl-L-methionine = a 2-methoxy-6-(all-trans-polyprenyl)phenol + S-adenosyl-L-homocysteine + H(+). It participates in cofactor biosynthesis; ubiquinone biosynthesis. Its function is as follows. O-methyltransferase that catalyzes the 2 O-methylation steps in the ubiquinone biosynthetic pathway. The polypeptide is Ubiquinone biosynthesis O-methyltransferase (Bradyrhizobium diazoefficiens (strain JCM 10833 / BCRC 13528 / IAM 13628 / NBRC 14792 / USDA 110)).